The primary structure comprises 449 residues: L10-interacting MYB domain-containing protein (449 aa).

A Myb-like domain is found at 162 to 225 (SNPQTKGYWS…YTRPQLKNHW (64 aa)). The tract at residues 297–324 (TYTPPSRSRKKLLHNRSESPQWRDTTPL) is disordered. Over residues 314 to 324 (ESPQWRDTTPL) the composition is skewed to polar residues.

As to quaternary structure, interacts with RPL10A. As to expression, expressed in seedlings, leaves, roots, stems and flowers.

Its subcellular location is the nucleus. In terms of biological role, transcriptional repressor that associates with ribosomal protein promoters. This chain is L10-interacting MYB domain-containing protein, found in Arabidopsis thaliana (Mouse-ear cress).